The sequence spans 144 residues: Deoxyuridine 5'-triphosphate nucleotidohydrolase (144 aa).

Substrate is bound by residues 63–65 (RSG), N76, and 80–82 (TID).

This sequence belongs to the dUTPase family. It depends on Mg(2+) as a cofactor.

It catalyses the reaction dUTP + H2O = dUMP + diphosphate + H(+). It functions in the pathway pyrimidine metabolism; dUMP biosynthesis; dUMP from dCTP (dUTP route): step 2/2. Its function is as follows. This enzyme is involved in nucleotide metabolism: it produces dUMP, the immediate precursor of thymidine nucleotides and it decreases the intracellular concentration of dUTP so that uracil cannot be incorporated into DNA. The chain is Deoxyuridine 5'-triphosphate nucleotidohydrolase from Alkaliphilus metalliredigens (strain QYMF).